The primary structure comprises 335 residues: Epidermal differentiation-specific protein (335 aa).

Beta/gamma crystallin 'Greek key' domains lie at 2–42, 43–81, 87–126, and 127–169; these read NTIT…KIVG, QPWI…RLIT, PQIT…RVQR, and GAWA…YPLR.

This sequence belongs to the beta/gamma-crystallin family. Epidermis specific.

The polypeptide is Epidermal differentiation-specific protein (Cynops pyrrhogaster (Japanese fire-bellied newt)).